Consider the following 200-residue polypeptide: Endoribonuclease YbeY (200 aa).

A compositionally biased stretch (pro residues) spans methionine 1–proline 18. The tract at residues methionine 1–aspartate 22 is disordered. Zn(2+) is bound by residues histidine 151, histidine 155, and histidine 161.

The protein belongs to the endoribonuclease YbeY family. Zn(2+) is required as a cofactor.

The protein resides in the cytoplasm. Functionally, single strand-specific metallo-endoribonuclease involved in late-stage 70S ribosome quality control and in maturation of the 3' terminus of the 16S rRNA. This is Endoribonuclease YbeY from Rhodospirillum rubrum (strain ATCC 11170 / ATH 1.1.1 / DSM 467 / LMG 4362 / NCIMB 8255 / S1).